The chain runs to 182 residues: Rhodanese-like domain-containing protein 15, chloroplastic (182 aa).

The N-terminal 65 residues, 1 to 65 (METTAFNTTS…TTSRGNVAAE (65 aa)), are a transit peptide targeting the chloroplast. The Rhodanese domain maps to 82 to 182 (AQAGYRYLDV…WTENELPVEE (101 aa)). Cys142 serves as the catalytic Cysteine persulfide intermediate.

The protein resides in the plastid. The protein localises to the chloroplast. It is found in the thylakoid. In Arabidopsis thaliana (Mouse-ear cress), this protein is Rhodanese-like domain-containing protein 15, chloroplastic (STR15).